A 493-amino-acid polypeptide reads, in one-letter code: Transmembrane protein 145 (493 aa).

A helical membrane pass occupies residues 9–29; that stretch reads LRRLLPPLLLLLLSLPPRARA. N-linked (GlcNAc...) asparagine glycosylation occurs at Asn35. Helical transmembrane passes span 175 to 195, 207 to 227, 241 to 261, 282 to 302, 318 to 338, 349 to 369, and 381 to 401; these read VTFL…GYLL, MFMA…IYWG, ILAK…LILL, VYMT…AEFF, GLIG…LVSL, VPFF…ALIA, and IVNG…LIMT. Asn444 is a glycosylation site (N-linked (GlcNAc...) asparagine). Residues 464–493 form a disordered region; the sequence is PATSPLPRAAPDSGLPLFRDLRPPGPLRDL.

It is found in the membrane. The protein is Transmembrane protein 145 (TMEM145) of Homo sapiens (Human).